Here is a 2844-residue protein sequence, read N- to C-terminus: Sodium channel protein 60E (2844 aa).

Topologically, residues 1 to 121 (MSDDQATFND…WSPARRVCVY (121 aa)) are cytoplasmic. The I repeat unit spans residues 107 to 434 (FLFYPWSPAR…FDPSVLNVKK (328 aa)). A helical transmembrane segment spans residues 122–145 (IATNQFFDYCVMATILFNCIFLAM). Residues 146–151 (TETVEE) are Extracellular-facing. Residues 152-172 (AEYIFLAIYSIEMVIKIIAKG) traverse the membrane as a helical segment. The Cytoplasmic segment spans residues 173–183 (FLLNKYTYLRN). A helical membrane pass occupies residues 184–202 (PWNWLDFVVITSGYATIGM). At 203 to 208 (EVGNLA) the chain is on the extracellular side. The chain crosses the membrane as a helical; Voltage-sensor span at residues 209-228 (GLRTFRVLRALKTVSIMPGL). Residues 229 to 244 (KTIINALLHSFRQLAE) lie on the Cytoplasmic side of the membrane. Residues 245 to 265 (VMTLTIFCLMVFALFALQVYM) form a helical membrane-spanning segment. Residues 266 to 340 (GELRNKCVRQ…PNHGYTNFDN (75 aa)) are Extracellular-facing. C272 and C318 form a disulfide bridge. Residues N282, N293, and N311 are each glycosylated (N-linked (GlcNAc...) asparagine). The segment at residues 341–365 (FMWSMLTTFQLITLDYWENVYNMVL) is an intramembrane region (pore-forming). Residues 366–374 (ATCGPMSVS) are Extracellular-facing. A helical membrane pass occupies residues 375-395 (FFTVVVFFGSFYLINLMLAVV). Over 396 to 687 (ALSYEEEAEI…QNCLYKVVRD (292 aa)) the chain is Cytoplasmic. The disordered stretch occupies residues 452–610 (ASYSKKKTRR…QDTTNDMGHV (159 aa)). Positions 455–465 (SKKKTRRKKTK) are enriched in basic residues. The span at 469 to 479 (EGGTNGNGNGS) shows a compositional bias: gly residues. Low complexity-rich tracts occupy residues 511–520 (QAQKQYQQME) and 577–586 (SSNSSGVNRE). The segment covering 593–603 (GVVDDHEEQDT) has biased composition (acidic residues). One copy of the II repeat lies at 668–1130 (CTDYESWLQF…ESIELLGQYN (463 aa)). Residues 688–708 (PLFELAITLCIVLNTAFLAME) traverse the membrane as a helical segment. Over 709-718 (HHGMSESFRN) the chain is Extracellular. A helical membrane pass occupies residues 719–743 (ALDVGNKVFTSIFTFECIVKLMALS). The Cytoplasmic segment spans residues 744–749 (KDFFLC). Residues 750–769 (GWNIFDLLIVTASLLDIIFE) form a helical membrane-spanning segment. The Extracellular portion of the chain corresponds to 770 to 775 (LVDGLS). The chain crosses the membrane as a helical; Voltage-sensor span at residues 776-795 (VLRGLRLLRVLKLAQSWTTM). Residues 796–810 (KVLLSIIISTIGALG) lie on the Cytoplasmic side of the membrane. A helical membrane pass occupies residues 811-832 (NLTLILVIVIYIFAVIGMQLFS). At 833–852 (KDYTPEKFDPDPVPRWNFND) the chain is on the extracellular side. An intramembrane region (pore-forming) is located at residues 853-873 (FFHSFMMIFRILCGEWIEPLW). Topologically, residues 874–889 (DCMRAEEEQGASTCFA) are extracellular. A disulfide bridge connects residues C875 and C887. Residues 890 to 910 (IFLPTLVMGNFMVLNLFLALL) form a helical membrane-spanning segment. Over 911–1742 (LNSFNSEELK…SAKHWTRVRT (832 aa)) the chain is Cytoplasmic. The segment covering 1129–1157 (YNSTDTDPYANDQRSGCGSFNRGDSLQDN) has biased composition (polar residues). Disordered regions lie at residues 1129–1166 (YNST…GSEE), 1185–1224 (YRKS…NSMS), 1268–1288 (ISNV…ENET), 1577–1630 (APTP…ADAS), and 1635–1654 (LAMA…ATQK). Positions 1191 to 1203 (RLSQSSGQSQRSL) are enriched in low complexity. Residues 1204-1213 (LKSEEAEMRR) are compositionally biased toward basic and acidic residues. 3 stretches are compositionally biased toward polar residues: residues 1277-1286 (PSSQMGQPEN), 1604-1618 (PQST…QSAR), and 1640-1654 (KTEQ…ATQK). Residues 1723–2040 (PWFMSCMDTQ…QKHYYTAMKK (318 aa)) form an III repeat. Residues 1743-1763 (AVLTVVDTPAFEWFVLVLIFA) traverse the membrane as a helical segment. Topologically, residues 1764-1789 (SSITLCFEDINLDKNKTLKRVLYWIN) are extracellular. Residues N1778 and N1789 are each glycosylated (N-linked (GlcNAc...) asparagine). The helical transmembrane segment at 1790–1810 (FSFCLIFVVEMILKWLALGFS) threads the bilayer. The Cytoplasmic segment spans residues 1811-1813 (KYF). A helical membrane pass occupies residues 1814 to 1834 (TSFWTILDFIIVFVSVFSLLI). Residues 1835–1839 (EENEN) are Extracellular-facing. Residues 1840-1861 (LKVLRSLRTLRALRPLRAISRW) form a helical; Voltage-sensor membrane-spanning segment. Residues 1862-1880 (QGMRIVVNALMYAIPSIFN) are Cytoplasmic-facing. The helical transmembrane segment at 1881–1902 (VLLVCLVFWLIFSIMGVQFFGG) threads the bilayer. Over 1903–1943 (KFFKCVNEMGELLPITEVNDKWDCIEQNYTWINSKITFDHV) the chain is Extracellular. Residue N1930 is glycosylated (N-linked (GlcNAc...) asparagine). The segment at residues 1944-1965 (GMGYLALLQVATFEGWMEVMAD) is an intramembrane region (pore-forming). Topologically, residues 1966–1981 (AVDARGVDLQPQREAN) are extracellular. The helical transmembrane segment at 1982-2002 (LYAYIYFVIFIVCGSFFTLNL) threads the bilayer. Over 2003 to 2069 (FIGVIIDNFN…MFYDLSNSRR (67 aa)) the chain is Cytoplasmic. Residues 2050–2311 (IKRPINHFLA…NMYIAIILEN (262 aa)) form an IV repeat. Residues 2070 to 2090 (FEIAIFVLIFLNMLTMGIEHY) traverse the membrane as a helical segment. The Extracellular segment spans residues 2091 to 2095 (DQPHA). A helical membrane pass occupies residues 2096-2116 (VFFILEVSNAFFTTVFGLEAI). Topologically, residues 2117 to 2132 (VKIVGLRYHYFTVPWN) are cytoplasmic. The chain crosses the membrane as a helical span at residues 2133 to 2153 (VFDFLLVLASIFGILMEDIMI). The Extracellular portion of the chain corresponds to 2154 to 2162 (DLPISPTLL). The chain crosses the membrane as a helical; Voltage-sensor span at residues 2163–2184 (RVVRVFRIGRILRLIKAAKGIR). Topologically, residues 2185-2199 (KLLFALVVSLPALFN) are cytoplasmic. Residues 2200 to 2220 (IGALLGLITFIYAILGMSLFG) form a helical membrane-spanning segment. The Extracellular segment spans residues 2221–2236 (NVKLQGALDDMVNFQT). Residues 2237 to 2259 (FGRSMQLLFRLMTSAGWNDVLES) constitute an intramembrane region (pore-forming). Over 2260–2288 (LMIQPPDCDPFIHGHTNGNCGHPLLAITY) the chain is Extracellular. Residues 2289–2309 (FTSFIIISYMIVINMYIAIIL) traverse the membrane as a helical segment. The Cytoplasmic portion of the chain corresponds to 2310 to 2844 (ENFNQAHQEE…QFESLPDRQR (535 aa)). An IQ domain is found at 2441 to 2470 (QEKAAKTIQTGWKEYLRRKREKERSNSGDS). 4 disordered regions span residues 2457–2479 (RRKR…SPGG), 2584–2668 (SLTS…LSAQ), 2780–2802 (DSPK…GAPI), and 2818–2844 (NPEK…DRQR). Residues 2467-2479 (SGDSATQTSSPGG) show a composition bias toward polar residues. Low complexity predominate over residues 2595–2632 (AMNNTTNTTSNSASTSGTASSTATAPATGCGPAATSAS). A compositionally biased stretch (basic residues) spans 2647-2658 (SRKRASSFIRKK). The span at 2825–2836 (DQGNGQDETAQF) shows a compositional bias: polar residues.

It belongs to the sodium channel (TC 1.A.1.10) family. NaCP60E subfamily. As to expression, in embryonic and larval stages, expression is limited to very few non-neuronal cells in either the CNS or PNS. In pupal and adult stages, expressed in cell bodies of the fly central nervous system, including optic lobes, central brain, subesophageal ganglion, thoracico-abdominal ganglion, major olfactory organs, the third antennal segment and the maxillary palps.

It is found in the cell membrane. Mediates the voltage-dependent sodium ion permeability of excitable membranes. Plays a role in processing of olfactory information during the olfactory avoidance response. This is Sodium channel protein 60E (NaCP60E) from Drosophila melanogaster (Fruit fly).